The primary structure comprises 120 residues: C-C motif chemokine 23 (120 aa).

A signal peptide spans 1–21 (MKVSVAALSCLMLVTALGSQA). Cystine bridges form between Cys-54/Cys-78, Cys-55/Cys-94, and Cys-65/Cys-105.

It belongs to the intercrine beta (chemokine CC) family. In terms of processing, the N-terminal is proteolytically cleaved by proteases associated with inflammatory responses. The processed forms, CCL23(19-99), CCL23(22-99), CCL23(27-99) and CCL23(30-99) exhibit increase in CCR1-mediated signaling and chemotaxis assays in vitro. High levels in adult lung, liver, skeletal muscle and pancreas. Moderate levels in fetal liver, adult bone marrow and placenta. The short form is the major species and the longer form was detected only in very low abundance. CCL23(19-99), CCL23(22-99), CCL23(27-99), CCL23(30-99) are found in high levels in synovial fluids from rheumatoid patients.

The protein resides in the secreted. Functionally, shows chemotactic activity for monocytes, resting T-lymphocytes, and neutrophils, but not for activated lymphocytes. Inhibits proliferation of myeloid progenitor cells in colony formation assays. This protein can bind heparin. Binds CCR1. CCL23(19-99), CCL23(22-99), CCL23(27-99), CCL23(30-99) are more potent chemoattractants than CCL23. This is C-C motif chemokine 23 (CCL23) from Homo sapiens (Human).